A 152-amino-acid polypeptide reads, in one-letter code: SsrA-binding protein (152 aa).

Belongs to the SmpB family.

It is found in the cytoplasm. Its function is as follows. Required for rescue of stalled ribosomes mediated by trans-translation. Binds to transfer-messenger RNA (tmRNA), required for stable association of tmRNA with ribosomes. tmRNA and SmpB together mimic tRNA shape, replacing the anticodon stem-loop with SmpB. tmRNA is encoded by the ssrA gene; the 2 termini fold to resemble tRNA(Ala) and it encodes a 'tag peptide', a short internal open reading frame. During trans-translation Ala-aminoacylated tmRNA acts like a tRNA, entering the A-site of stalled ribosomes, displacing the stalled mRNA. The ribosome then switches to translate the ORF on the tmRNA; the nascent peptide is terminated with the 'tag peptide' encoded by the tmRNA and targeted for degradation. The ribosome is freed to recommence translation, which seems to be the essential function of trans-translation. This chain is SsrA-binding protein, found in Rickettsia massiliae (strain Mtu5).